A 476-amino-acid chain; its full sequence is UDP-glucose 6-dehydrogenase (476 aa).

NAD(+)-binding positions include 7-12 (GAGYVG), Asp-32, Arg-37, 85-89 (VNTPT), 126-127 (ST), and Glu-161. Residues 157 to 161 (EFLAE), 216 to 220 (KLAAN), Arg-256, and 263 to 269 (QASVGFG) contribute to the substrate site. The active-site Nucleophile is the Cys-272. An NAD(+)-binding site is contributed by 272-275 (CFQK). 334-335 (FK) is a substrate binding site. Residue Arg-342 participates in NAD(+) binding. Residue Arg-439 participates in substrate binding.

Belongs to the UDP-glucose/GDP-mannose dehydrogenase family.

The enzyme catalyses UDP-alpha-D-glucose + 2 NAD(+) + H2O = UDP-alpha-D-glucuronate + 2 NADH + 3 H(+). Its pathway is nucleotide-sugar biosynthesis; UDP-alpha-D-glucuronate biosynthesis; UDP-alpha-D-glucuronate from UDP-alpha-D-glucose: step 1/1. Functionally, involved in the biosynthesis of glycosaminoglycans; hyaluronan, chondroitin sulfate and heparan sulfate. Required for wingless signaling in different tissues. The chain is UDP-glucose 6-dehydrogenase (sgl) from Drosophila melanogaster (Fruit fly).